A 351-amino-acid chain; its full sequence is LETM1 domain-containing protein 1 (351 aa).

Over 1-130 the chain is Cytoplasmic; the sequence is MLSGMALCRT…FRRDIIKAAP (130 aa). Residues 131 to 151 form a helical membrane-spanning segment; it reads VVIISIPPFANYLVFVLMYFF. Topologically, residues 152–351 are mitochondrial intermembrane; it reads PRQLLIRHFW…SANYLQSIKQ (200 aa). One can recognise a Letm1 RBD domain in the interval 172–351; it reads IYHRMRVEAY…SANYLQSIKQ (180 aa).

It is found in the mitochondrion outer membrane. It localises to the nucleus. The protein resides in the mitochondrion inner membrane. May play an essential role for mitochondrial structure and function. This is LETM1 domain-containing protein 1 from Xenopus tropicalis (Western clawed frog).